Reading from the N-terminus, the 461-residue chain is F-box protein At3g62230 (461 aa).

The F-box domain maps to 7 to 55; it reads VDIISTLSDFLLVLIISNLSFKEALSTSRLSTRWRHICRETRNISFRED.

As to quaternary structure, part of a SCF (ASK-cullin-F-box) protein ligase complex. Interacts with ASK4.

The protein localises to the nucleus. The protein operates within protein modification; protein ubiquitination. In terms of biological role, component of SCF(ASK-cullin-F-box) E3 ubiquitin ligase complexes, which may mediate the ubiquitination and subsequent proteasomal degradation of target proteins. In Arabidopsis thaliana (Mouse-ear cress), this protein is F-box protein At3g62230.